The primary structure comprises 234 residues: LexA repressor (234 aa).

The disordered stretch occupies residues 1 to 29; that stretch reads MSDAANPEGHKRSLPGRPPGIRADSSGLT. Residues 52–72 constitute a DNA-binding region (H-T-H motif); sequence MREIGQAVGLSSTSSVAHQLM. The disordered stretch occupies residues 90–109; it reads YEVRGSDQAASVQPTDTAGK. Catalysis depends on for autocatalytic cleavage activity residues Ser-158 and Lys-195.

It belongs to the peptidase S24 family. Homodimer.

The enzyme catalyses Hydrolysis of Ala-|-Gly bond in repressor LexA.. Functionally, represses a number of genes involved in the response to DNA damage (SOS response), including recA and lexA. In the presence of single-stranded DNA, RecA interacts with LexA causing an autocatalytic cleavage which disrupts the DNA-binding part of LexA, leading to derepression of the SOS regulon and eventually DNA repair. The chain is LexA repressor from Streptomyces coelicolor (strain ATCC BAA-471 / A3(2) / M145).